The primary structure comprises 162 residues: Ecotin (162 aa).

The signal sequence occupies residues 1–18; it reads MKMFVPAVVFAASASAWA. Cys70 and Cys107 are oxidised to a cystine.

This sequence belongs to the protease inhibitor I11 (ecotin) family. Homodimer.

The protein localises to the periplasm. Functionally, general inhibitor of pancreatic serine proteases: inhibits chymotrypsin, trypsin, elastases, factor X, kallikrein as well as a variety of other proteases. The polypeptide is Ecotin (Salmonella arizonae (strain ATCC BAA-731 / CDC346-86 / RSK2980)).